The chain runs to 275 residues: Elongation factor Ts (275 aa).

Lys36 participates in a covalent cross-link: Isoglutamyl lysine isopeptide (Lys-Gln) (interchain with Q-Cter in protein Pup). The segment at 76-79 (TDFV) is involved in Mg(2+) ion dislocation from EF-Tu.

Belongs to the EF-Ts family.

The protein resides in the cytoplasm. Functionally, associates with the EF-Tu.GDP complex and induces the exchange of GDP to GTP. It remains bound to the aminoacyl-tRNA.EF-Tu.GTP complex up to the GTP hydrolysis stage on the ribosome. The sequence is that of Elongation factor Ts from Mycolicibacterium smegmatis (strain ATCC 700084 / mc(2)155) (Mycobacterium smegmatis).